Consider the following 69-residue polypeptide: Putative membrane protein insertion efficiency factor (69 aa).

Belongs to the UPF0161 family.

It localises to the cell membrane. In terms of biological role, could be involved in insertion of integral membrane proteins into the membrane. This chain is Putative membrane protein insertion efficiency factor, found in Thermomicrobium roseum (strain ATCC 27502 / DSM 5159 / P-2).